Reading from the N-terminus, the 119-residue chain is Hydrogenase maturation factor HypA (119 aa).

His-2 provides a ligand contact to Ni(2+). Zn(2+) contacts are provided by Cys-73, Cys-76, Cys-89, and Cys-92.

Belongs to the HypA/HybF family.

Its function is as follows. Involved in the maturation of [NiFe] hydrogenases. Required for nickel insertion into the metal center of the hydrogenase. In Dehalococcoides mccartyi (strain CBDB1), this protein is Hydrogenase maturation factor HypA.